The chain runs to 204 residues: Large ribosomal subunit protein eL15 (204 aa).

This sequence belongs to the eukaryotic ribosomal protein eL15 family. Component of the large ribosomal subunit.

Its subcellular location is the cytoplasm. Its function is as follows. Component of the large ribosomal subunit. The ribosome is a large ribonucleoprotein complex responsible for the synthesis of proteins in the cell. This is Large ribosomal subunit protein eL15 (rpl15) from Silurus asotus (Amur catfish).